The primary structure comprises 143 residues: Phosphoribosyl-AMP cyclohydrolase (143 aa).

Aspartate 86 contacts Mg(2+). Cysteine 87 serves as a coordination point for Zn(2+). The Mg(2+) site is built by aspartate 88 and aspartate 90. The Zn(2+) site is built by cysteine 103 and cysteine 110.

This sequence belongs to the PRA-CH family. In terms of assembly, homodimer. The cofactor is Mg(2+). It depends on Zn(2+) as a cofactor.

Its subcellular location is the cytoplasm. The enzyme catalyses 1-(5-phospho-beta-D-ribosyl)-5'-AMP + H2O = 1-(5-phospho-beta-D-ribosyl)-5-[(5-phospho-beta-D-ribosylamino)methylideneamino]imidazole-4-carboxamide. It participates in amino-acid biosynthesis; L-histidine biosynthesis; L-histidine from 5-phospho-alpha-D-ribose 1-diphosphate: step 3/9. In terms of biological role, catalyzes the hydrolysis of the adenine ring of phosphoribosyl-AMP. This chain is Phosphoribosyl-AMP cyclohydrolase, found in Rhodospirillum rubrum (strain ATCC 11170 / ATH 1.1.1 / DSM 467 / LMG 4362 / NCIMB 8255 / S1).